Here is a 359-residue protein sequence, read N- to C-terminus: 4-galactosyl-N-acetylglucosaminide 3-alpha-L-fucosyltransferase 9 (359 aa).

At 1–11 (MTSTSKGILRP) the chain is on the cytoplasmic side. The chain crosses the membrane as a helical; Signal-anchor for type II membrane protein span at residues 12-32 (FLIVCVILACFMACLLIYIKP). The Lumenal segment spans residues 33–359 (TNSWVFSPME…VGNLEKWFWN (327 aa)). A glycan (N-linked (GlcNAc...) asparagine) is linked at Asn-62. Residues 63-168 (ETTILVWVWP…RRDSDIQVPY (106 aa)) are acceptor-binding. Gln-75 contributes to the a beta-D-galactosyl-(1-&gt;4)-N-acetyl-beta-D-glucosaminyl derivative binding site. 3 disulfide bridges follow: Cys-82/Cys-335, Cys-91/Cys-338, and Cys-190/Cys-238. Asn-101 carries N-linked (GlcNAc...) asparagine glycosylation. Position 137 (Glu-137) interacts with a beta-D-galactosyl-(1-&gt;4)-N-acetyl-beta-D-glucosaminyl derivative. Glu-137 (nucleophile) is an active-site residue. Residue Glu-137 coordinates GDP-beta-L-fucose. An N-linked (GlcNAc...) asparagine glycan is attached at Asn-153. Positions 168, 192, 194, 195, 202, 226, 241, 246, 252, 255, and 256 each coordinate GDP-beta-L-fucose. The tract at residues 169-326 (GFLTVSTNPF…NWRKDFTVNL (158 aa)) is donor-binding. Positions 327–359 (PRFWESHACLACDHVKRHQEYKSVGNLEKWFWN) are acceptor-binding.

This sequence belongs to the glycosyltransferase 10 family. Homodimer. N-glycosylated with complex-type N-glycans.

The protein resides in the golgi apparatus. The protein localises to the trans-Golgi network membrane. It is found in the golgi apparatus membrane. The catalysed reaction is a beta-D-galactosyl-(1-&gt;4)-N-acetyl-beta-D-glucosaminyl derivative + GDP-beta-L-fucose = a beta-D-galactosyl-(1-&gt;4)-[alpha-L-fucosyl-(1-&gt;3)]-N-acetyl-beta-D-glucosaminyl derivative + GDP + H(+). It catalyses the reaction an alpha-Neu5Ac-(2-&gt;3)-beta-D-Gal-(1-&gt;4)-beta-D-GlcNAc-(1-&gt;3)-beta-D-Gal-(1-&gt;4)-beta-D-GlcNAc derivative + GDP-beta-L-fucose = an alpha-Neu5Ac-(2-&gt;3)-beta-D-Gal-(1-&gt;4)-beta-D-GlcNAc-(1-&gt;3)-beta-D-Gal-(1-&gt;4)-[alpha-L-Fuc-(1-&gt;3)]-beta-D-GlcNAc derivative + GDP + H(+). It carries out the reaction alpha-N-glycoloylneuraminosyl-(2-&gt;3)-beta-D-galactosyl-(1-&gt;4)-N-acetyl-beta-D-glucosaminyl-(1-&gt;3)-beta-D-galactosyl-(1-&gt;4)-N-acetyl-beta-D-glucosaminyl-(1-&gt;3)-beta-D-galactosyl-(1-&gt;4)-beta-D-glucosyl-(1&lt;-&gt;1')-ceramide + GDP-beta-L-fucose = alpha-N-glycoloylneuraminosyl-(2-&gt;3)-beta-D-galactosyl-(1-&gt;4)-N-acetyl-beta-D-glucosaminyl-(1-&gt;3)-beta-D-galactosyl-(1-&gt;4)-[alpha-L-fucosyl-(1-&gt;3)]-N-acetyl-beta-D-glucosaminyl-(1-&gt;3)-beta-D-galactosyl-(1-&gt;4)-beta-D-glucosyl-(1&lt;-&gt;1')-ceramide + GDP + H(+). The enzyme catalyses alpha-D-galactosyl-(1-&gt;3)-beta-D-galactosyl-(1-&gt;4)-N-acetyl-beta-D-glucosaminyl-(1-&gt;3)-beta-D-galactosyl-(1-&gt;4)-beta-D-glucosyl-(1&lt;-&gt;1')-ceramide + GDP-beta-L-fucose = a neolactoside IV(3)-alpha-Gal,III(3)-alpha-Fuc-nLc4Cer + GDP + H(+). The catalysed reaction is a neolactoside nLc4Cer + GDP-beta-L-fucose = a neolactoside III(3)-alpha-Fuc-nLc4Cer + GDP + H(+). It catalyses the reaction an N-acetyl-alpha-neuraminyl-(2-&gt;3)-beta-D-galactosyl-(1-&gt;4)-N-acetyl-beta-D-glucosaminyl derivative + GDP-beta-L-fucose = an alpha-Neu5Ac-(2-&gt;3)-beta-D-Gal-(1-&gt;4)-[alpha-L-Fuc-(1-&gt;3)]-beta-D-GlcNAc derivative + GDP + H(+). It carries out the reaction beta-D-Gal-(1-&gt;4)-beta-D-GlcNAc-(1-&gt;3)-beta-D-Gal-(1-&gt;4)-D-Glc + GDP-beta-L-fucose = beta-D-Gal-(1-&gt;4)-[alpha-L-Fuc-(1-&gt;3)]-beta-D-GlcNAc-(1-&gt;3)-beta-D-Gal-(1-&gt;4)-D-Glc + GDP + H(+). The enzyme catalyses an alpha-L-Fuc-(1-&gt;2)-beta-D-Gal-(1-&gt;4)-beta-D-GlcNAc derivative + GDP-beta-L-fucose = an alpha-L-Fuc-(1-&gt;2)-beta-D-Gal-(1-&gt;4)-[alpha-L-Fuc-(1-&gt;3)]-beta-D-GlcNAc derivative + GDP + H(+). The protein operates within protein modification; protein glycosylation. Its pathway is glycolipid biosynthesis. Activated by Mn2+. Functionally, catalyzes alpha(1-&gt;3) linkage of fucosyl moiety transferred from GDP-beta-L-fucose to N-acetyl glucosamine (GlcNAc) within type 2 lactosamine (LacNAc, beta-D-Gal-(1-&gt;4)-beta-D-GlcNAc-) glycan attached to glycolipids and N- or O-linked glycoproteins. Fucosylates distal type 2 LacNAc and its fucosylated (H-type 2 LacNAc) and sialylated (sialyl-type 2 LacNAc) derivatives to form Lewis x (Lex) (CD15) and Lewis y (Ley) antigenic epitopes involved in cell adhesion and differentiation. Generates Lex epitopes in the brain, presumably playing a role in the maintenance of neuronal stemness and neurite outgrowth in progenitor neural cells. Fucosylates the internal type 2 LacNAc unit of the polylactosamine chain to form VIM-2 antigen that serves as recognition epitope for SELE. Can also modify milk oligosaccharides in particular type 2 tetrasaccharide LNnT. The protein is 4-galactosyl-N-acetylglucosaminide 3-alpha-L-fucosyltransferase 9 of Cricetulus griseus (Chinese hamster).